We begin with the raw amino-acid sequence, 82 residues long: Small ribosomal subunit protein uS17 (82 aa).

It belongs to the universal ribosomal protein uS17 family. As to quaternary structure, part of the 30S ribosomal subunit.

Functionally, one of the primary rRNA binding proteins, it binds specifically to the 5'-end of 16S ribosomal RNA. This Tolumonas auensis (strain DSM 9187 / NBRC 110442 / TA 4) protein is Small ribosomal subunit protein uS17.